A 148-amino-acid chain; its full sequence is MASKRILKELKDLQKDPPTSCSAGPVAEDMFHWQATIMGPSDSPYSGGVFLVTIHFPPDYPFKPPKVAFRTKVFHPNVNSNGSICLDILKEQWSPALTISKVLLSICSLLTDPNPDDPLVPEIAHMYKTDRAKYESTARSWTQKYAMG.

A UBC core domain is found at 1 to 147 (MASKRILKEL…ARSWTQKYAM (147 aa)). Residue Cys85 is the Glycyl thioester intermediate of the active site.

This sequence belongs to the ubiquitin-conjugating enzyme family. In terms of assembly, interacts with SINAT5. Expressed in seeds, pistils, siliques, hypocotyls and leaves.

The enzyme catalyses S-ubiquitinyl-[E1 ubiquitin-activating enzyme]-L-cysteine + [E2 ubiquitin-conjugating enzyme]-L-cysteine = [E1 ubiquitin-activating enzyme]-L-cysteine + S-ubiquitinyl-[E2 ubiquitin-conjugating enzyme]-L-cysteine.. It functions in the pathway protein modification; protein ubiquitination. Its function is as follows. Accepts the ubiquitin from the E1 complex and catalyzes its covalent attachment to other proteins. This Arabidopsis thaliana (Mouse-ear cress) protein is Ubiquitin-conjugating enzyme E2 28.